The primary structure comprises 514 residues: Peptide chain release factor 3 (514 aa).

One can recognise a tr-type G domain in the interval 8-268; it reads KKRRTFAIIS…TFLKFAPEPH (261 aa). GTP-binding positions include 17 to 24, 85 to 89, and 139 to 142; these read SHPDAGKT, DTPGH, and NKLD.

It belongs to the TRAFAC class translation factor GTPase superfamily. Classic translation factor GTPase family. PrfC subfamily.

Its subcellular location is the cytoplasm. Its function is as follows. Increases the formation of ribosomal termination complexes and stimulates activities of RF-1 and RF-2. It binds guanine nucleotides and has strong preference for UGA stop codons. It may interact directly with the ribosome. The stimulation of RF-1 and RF-2 is significantly reduced by GTP and GDP, but not by GMP. The polypeptide is Peptide chain release factor 3 (Streptococcus thermophilus (strain ATCC BAA-491 / LMD-9)).